A 320-amino-acid chain; its full sequence is Lipoyl synthase (320 aa).

7 residues coordinate [4Fe-4S] cluster: Cys67, Cys72, Cys78, Cys93, Cys97, Cys100, and Ser307. The Radical SAM core domain maps to 79–296 (FNHGTATFMI…RDKAEKMGFE (218 aa)).

It belongs to the radical SAM superfamily. Lipoyl synthase family. The cofactor is [4Fe-4S] cluster.

Its subcellular location is the cytoplasm. The enzyme catalyses [[Fe-S] cluster scaffold protein carrying a second [4Fe-4S](2+) cluster] + N(6)-octanoyl-L-lysyl-[protein] + 2 oxidized [2Fe-2S]-[ferredoxin] + 2 S-adenosyl-L-methionine + 4 H(+) = [[Fe-S] cluster scaffold protein] + N(6)-[(R)-dihydrolipoyl]-L-lysyl-[protein] + 4 Fe(3+) + 2 hydrogen sulfide + 2 5'-deoxyadenosine + 2 L-methionine + 2 reduced [2Fe-2S]-[ferredoxin]. It participates in protein modification; protein lipoylation via endogenous pathway; protein N(6)-(lipoyl)lysine from octanoyl-[acyl-carrier-protein]: step 2/2. Functionally, catalyzes the radical-mediated insertion of two sulfur atoms into the C-6 and C-8 positions of the octanoyl moiety bound to the lipoyl domains of lipoate-dependent enzymes, thereby converting the octanoylated domains into lipoylated derivatives. This chain is Lipoyl synthase, found in Histophilus somni (strain 129Pt) (Haemophilus somnus).